Consider the following 237-residue polypeptide: Ribosomal RNA small subunit methyltransferase G (237 aa).

S-adenosyl-L-methionine is bound by residues Gly-78, Phe-83, 129–130, and Arg-148; that span reads AE.

It belongs to the methyltransferase superfamily. RNA methyltransferase RsmG family.

It localises to the cytoplasm. Functionally, specifically methylates the N7 position of a guanine in 16S rRNA. In Streptococcus pyogenes serotype M12 (strain MGAS9429), this protein is Ribosomal RNA small subunit methyltransferase G.